The chain runs to 1107 residues: Enolase-phosphatase E1 (1107 aa).

Positions 19 and 21 each coordinate Mg(2+). Substrate contacts are provided by residues 152–153 and Lys-186; that span reads SS. Asp-211 contributes to the Mg(2+) binding site. The tract at residues 258-1107 is disordered; it reads SVKSTETENG…SATPSVETES (850 aa). Residues 260–289 are compositionally biased toward basic and acidic residues; that stretch reads KSTETENGAEKETVTESTEKVADESEKETE. The span at 291–306 shows a compositional bias: low complexity; that stretch reads ETAAAETENGAEAENG. Positions 366–376 are enriched in acidic residues; sequence DAMDVDAEMTD. Basic and acidic residues-rich tracts occupy residues 393-427 and 435-462; these read VTEK…DTKQ and GEDK…KEEE. The segment covering 475–485 has biased composition (acidic residues); it reads DKMDVDEEDSA. Basic and acidic residues-rich tracts occupy residues 486-512, 534-548, 572-586, 593-604, 610-686, and 693-776; these read VIEK…KEEN, DETK…KEES, TVEK…SKSE, TSEKKVEDKSAN, KEPK…EVKA, and DESK…KSVD. Over residues 794–803 the composition is skewed to low complexity; that stretch reads EETSATTEAQ. 2 stretches are compositionally biased toward basic and acidic residues: residues 804-838 and 849-908; these read ATKE…DAKS and KEMK…ETKG. The segment covering 909–919 has biased composition (low complexity); that stretch reads VEATTAGPVEE. Acidic residues predominate over residues 920-935; sequence VAVEATEEDVAMEAES. Composition is skewed to basic and acidic residues over residues 937-957, 1001-1028, and 1035-1047; these read DAVK…KLDS, DEVK…EADS, and NHDE…KEND. Low complexity predominate over residues 1048 to 1083; the sequence is TSASNIEEASSATTTTTNGTSTESDSSSTTPSSETV.

This sequence belongs to the HAD-like hydrolase superfamily. MasA/MtnC family. As to quaternary structure, monomer. It depends on Mg(2+) as a cofactor.

It is found in the cytoplasm. The protein localises to the nucleus. It carries out the reaction 5-methylsulfanyl-2,3-dioxopentyl phosphate + H2O = 1,2-dihydroxy-5-(methylsulfanyl)pent-1-en-3-one + phosphate. It participates in amino-acid biosynthesis; L-methionine biosynthesis via salvage pathway; L-methionine from S-methyl-5-thio-alpha-D-ribose 1-phosphate: step 3/6. The protein operates within amino-acid biosynthesis; L-methionine biosynthesis via salvage pathway; L-methionine from S-methyl-5-thio-alpha-D-ribose 1-phosphate: step 4/6. Functionally, bifunctional enzyme that catalyzes the enolization of 2,3-diketo-5-methylthiopentyl-1-phosphate (DK-MTP-1-P) into the intermediate 2-hydroxy-3-keto-5-methylthiopentenyl-1-phosphate (HK-MTPenyl-1-P), which is then dephosphorylated to form the acireductone 1,2-dihydroxy-3-keto-5-methylthiopentene (DHK-MTPene). The chain is Enolase-phosphatase E1 from Aedes aegypti (Yellowfever mosquito).